We begin with the raw amino-acid sequence, 427 residues long: Serine--tRNA ligase (427 aa).

231 to 233 (TAE) lines the L-serine pocket. ATP is bound at residue 262–264 (RSE). Glu285 contacts L-serine. ATP is bound at residue 349–352 (EISS). Position 385 (Ser385) interacts with L-serine.

This sequence belongs to the class-II aminoacyl-tRNA synthetase family. Type-1 seryl-tRNA synthetase subfamily. As to quaternary structure, homodimer. The tRNA molecule binds across the dimer.

It localises to the cytoplasm. The catalysed reaction is tRNA(Ser) + L-serine + ATP = L-seryl-tRNA(Ser) + AMP + diphosphate + H(+). It carries out the reaction tRNA(Sec) + L-serine + ATP = L-seryl-tRNA(Sec) + AMP + diphosphate + H(+). Its pathway is aminoacyl-tRNA biosynthesis; selenocysteinyl-tRNA(Sec) biosynthesis; L-seryl-tRNA(Sec) from L-serine and tRNA(Sec): step 1/1. Its function is as follows. Catalyzes the attachment of serine to tRNA(Ser). Is also able to aminoacylate tRNA(Sec) with serine, to form the misacylated tRNA L-seryl-tRNA(Sec), which will be further converted into selenocysteinyl-tRNA(Sec). The chain is Serine--tRNA ligase from Rhizobium etli (strain ATCC 51251 / DSM 11541 / JCM 21823 / NBRC 15573 / CFN 42).